The primary structure comprises 296 residues: Probable lipid kinase YegS-like (296 aa).

In terms of domain architecture, DAGKc spans 1–130; it reads MPHTLLILNG…IDLAQVNDKH (130 aa). ATP contacts are provided by residues threonine 37, 63 to 69, and threonine 92; that span reads GDGTINE. 3 residues coordinate Mg(2+): leucine 212, aspartate 215, and leucine 217. The active-site Proton acceptor is glutamate 268.

Belongs to the diacylglycerol/lipid kinase family. YegS lipid kinase subfamily. The cofactor is Mg(2+). It depends on Ca(2+) as a cofactor.

The protein localises to the cytoplasm. Its function is as follows. Probably phosphorylates lipids; the in vivo substrate is unknown. The chain is Probable lipid kinase YegS-like from Yersinia enterocolitica serotype O:8 / biotype 1B (strain NCTC 13174 / 8081).